The following is a 159-amino-acid chain: Small ribosomal subunit protein uS7 (159 aa).

It belongs to the universal ribosomal protein uS7 family. Part of the 30S ribosomal subunit. Contacts proteins S9 and S11.

Functionally, one of the primary rRNA binding proteins, it binds directly to 16S rRNA where it nucleates assembly of the head domain of the 30S subunit. Is located at the subunit interface close to the decoding center, probably blocks exit of the E-site tRNA. This is Small ribosomal subunit protein uS7 from Sulfurihydrogenibium sp. (strain YO3AOP1).